Reading from the N-terminus, the 252-residue chain is MLAKRIIPCLDVKEGRVVKGVNFIGLQDVGDPVEIAEAYNEAGADEIVFLDITATHEGRKTIIDVVEKTAAKVFIPLTVGGGISSVKDMYNLLRAGADKVSINSAAVRNPKLIEEGAEHFGSQCIVVAIDARKVAEDKWNVYVNGGRVDTEMDAIEWAKRVVKLGAGEILLTSMDADGTKSGYDLRLTEEISKSVSIPVIASGGCGHTDHIIEVFQKTTVDAALAASIFHYGEATVQSVKRKLRDANVEVRL.

Catalysis depends on residues aspartate 11 and aspartate 130.

It belongs to the HisA/HisF family. Heterodimer of HisH and HisF.

It localises to the cytoplasm. The enzyme catalyses 5-[(5-phospho-1-deoxy-D-ribulos-1-ylimino)methylamino]-1-(5-phospho-beta-D-ribosyl)imidazole-4-carboxamide + L-glutamine = D-erythro-1-(imidazol-4-yl)glycerol 3-phosphate + 5-amino-1-(5-phospho-beta-D-ribosyl)imidazole-4-carboxamide + L-glutamate + H(+). It participates in amino-acid biosynthesis; L-histidine biosynthesis; L-histidine from 5-phospho-alpha-D-ribose 1-diphosphate: step 5/9. Functionally, IGPS catalyzes the conversion of PRFAR and glutamine to IGP, AICAR and glutamate. The HisF subunit catalyzes the cyclization activity that produces IGP and AICAR from PRFAR using the ammonia provided by the HisH subunit. The polypeptide is Imidazole glycerol phosphate synthase subunit HisF (Bacillus cereus (strain G9842)).